Here is a 380-residue protein sequence, read N- to C-terminus: uncharacterized protein (380 aa).

Disordered regions lie at residues 278-323 (AATI…PRVA) and 345-368 (SLPG…RPRR). Positions 301–319 (RNGPRRPARRGTSRGRRCA) are enriched in basic residues.

This is an uncharacterized protein from Mycobacterium tuberculosis (strain CDC 1551 / Oshkosh).